Reading from the N-terminus, the 31-residue chain is Scolopendra 20566.01 Da toxin (31 aa).

This sequence belongs to the CRISP family. Venom allergen 5-like subfamily. Post-translationally, contains 3 disulfide bonds. Expressed by the venom gland.

It localises to the secreted. The polypeptide is Scolopendra 20566.01 Da toxin (Scolopendra angulata (Barbados giant red centipede)).